Reading from the N-terminus, the 174-residue chain is B3 domain-containing protein At2g31862 (174 aa).

Positions 1 to 71 (MWVNLSCMCH…KLYIALVPLD (71 aa)) form a DNA-binding region, TF-B3.

The protein resides in the nucleus. In Arabidopsis thaliana (Mouse-ear cress), this protein is B3 domain-containing protein At2g31862.